Reading from the N-terminus, the 337-residue chain is Sideroflexin-4 (337 aa).

Ser2 carries the post-translational modification N-acetylserine. Helical transmembrane passes span 111–131 (AAFL…LKGI), 133–153 (SVIL…SING), and 165–185 (SLLM…PQFV). Position 197 is an N6-acetyllysine (Lys197). 2 consecutive transmembrane segments (helical) span residues 251–271 (ASRI…TYFF) and 293–313 (VLAM…IGQI).

It belongs to the sideroflexin family.

It localises to the mitochondrion inner membrane. Mitochondrial amino-acid transporter. Does not act as a serine transporter: not able to mediate transport of serine into mitochondria. The protein is Sideroflexin-4 of Homo sapiens (Human).